The sequence spans 439 residues: MKTKKFYQHLYFQVLTAISIGVAVGYYMPDTGTAMKPLGDGFIKMIKMIITPIIFCTVVTGIAGMDDMKKVGRVGGKALLYFEAVSTLALAIGLMVINVIQPGVGMNADVTKLDTKGLATYTATAAKSHSFADFALGIIPNSVVDAFAKGEILQVLFFAILFGLALSAMGEKGKPVYRMIDDVAHAFFGVVNIIMKFAPIGAFGAMAFTIGKFGLGSLTKLGMLMGSFYLTCLLFIFVVLGTIGKLCGFNIFKFISYIKEELLIVLGTSSSESALPRLMAKLENLGCSKSVVGLVIPTGYSFNLDGTSIYLTMAAVFVAQATNTPLDLTQTLTILGVLMLTSKGAAGVTGSGFVTLAATFAAIPTIPVAGLALILGIDRFMSEARALTNLVGNGVATVVVSRWENELNATRMSQVLNKELDEAAVEADLLMMDPEPEEA.

9 helical membrane-spanning segments follow: residues 9-29, 45-65, 80-100, 150-170, 186-206, 221-241, 291-311, 334-354, and 357-377; these read HLYFQVLTAISIGVAVGYYMP, MIKMIITPIIFCTVVTGIAGM, LYFEAVSTLALAIGLMVINVI, GEILQVLFFAILFGLALSAMG, AFFGVVNIIMKFAPIGAFGAM, LGMLMGSFYLTCLLFIFVVLG, VVGLVIPTGYSFNLDGTSIYL, ILGVLMLTSKGAAGVTGSGFV, and AATFAAIPTIPVAGLALILGI.

The protein belongs to the dicarboxylate/amino acid:cation symporter (DAACS) (TC 2.A.23) family.

It localises to the cell inner membrane. Functionally, responsible for the transport of dicarboxylates such as succinate, fumarate, and malate from the periplasm across the membrane. The chain is C4-dicarboxylate transport protein from Citrifermentans bemidjiense (strain ATCC BAA-1014 / DSM 16622 / JCM 12645 / Bem) (Geobacter bemidjiensis).